The primary structure comprises 201 residues: ATP-dependent dethiobiotin synthetase BioD (201 aa).

ATP is bound at residue 11–16; that stretch reads DVGKTH. Mg(2+) is bound at residue Thr15. The active site involves Lys31. Residues Asp40 and 93-96 each bind ATP; that span reads ELAG. Residues Asp40 and Glu93 each contribute to the Mg(2+) site.

The protein belongs to the dethiobiotin synthetase family. As to quaternary structure, homodimer. Requires Mg(2+) as cofactor.

It is found in the cytoplasm. The enzyme catalyses (7R,8S)-7,8-diammoniononanoate + CO2 + ATP = (4R,5S)-dethiobiotin + ADP + phosphate + 3 H(+). The protein operates within cofactor biosynthesis; biotin biosynthesis; biotin from 7,8-diaminononanoate: step 1/2. Its function is as follows. Catalyzes a mechanistically unusual reaction, the ATP-dependent insertion of CO2 between the N7 and N8 nitrogen atoms of 7,8-diaminopelargonic acid (DAPA, also called 7,8-diammoniononanoate) to form a ureido ring. The protein is ATP-dependent dethiobiotin synthetase BioD of Campylobacter jejuni subsp. jejuni serotype O:6 (strain 81116 / NCTC 11828).